We begin with the raw amino-acid sequence, 124 residues long: Small ribosomal subunit protein eS6 (124 aa).

The protein belongs to the eukaryotic ribosomal protein eS6 family.

The sequence is that of Small ribosomal subunit protein eS6 from Methanococcus maripaludis (strain C5 / ATCC BAA-1333).